A 634-amino-acid polypeptide reads, in one-letter code: Chaperone protein HtpG (634 aa).

The tract at residues 1–342 (MTVDTDKQTL…SADLSLNVSR (342 aa)) is a; substrate-binding. Residues 343–559 (EILQSGPVVD…QGDLGLQMRQ (217 aa)) form a b region. Residues 560 to 634 (LLEASGQAVP…LNKLLLELSA (75 aa)) are c.

The protein belongs to the heat shock protein 90 family. As to quaternary structure, homodimer.

Its subcellular location is the cytoplasm. In terms of biological role, molecular chaperone. Has ATPase activity. The polypeptide is Chaperone protein HtpG (Xanthomonas campestris pv. campestris (strain 8004)).